A 258-amino-acid polypeptide reads, in one-letter code: MTQHSRDTPQFYLTAPSPCPYLPGRHERKVFTHLVGNKAGELNDLLTHGGFRRSQSIAYRPACDQCRACVSVRVIANEFKPSRNQRKLLARNADIVGEQRNPVPTSEQYSVFRAYLDQRHRYGGMADMTVLDYAMMVEDSHVQTRMIEYRKRTPDTGITGRGGELIAAALTDVLGDGLSMVYSFYEPNEQHRSLGTFMILDHIARARRLGLPYVYLGYWIEGSKKMDYKGRYLPQQRLAPSGWLRIDASGEMQPEPQD.

The protein belongs to the R-transferase family. Bpt subfamily.

It is found in the cytoplasm. It catalyses the reaction N-terminal L-glutamyl-[protein] + L-leucyl-tRNA(Leu) = N-terminal L-leucyl-L-glutamyl-[protein] + tRNA(Leu) + H(+). It carries out the reaction N-terminal L-aspartyl-[protein] + L-leucyl-tRNA(Leu) = N-terminal L-leucyl-L-aspartyl-[protein] + tRNA(Leu) + H(+). Its function is as follows. Functions in the N-end rule pathway of protein degradation where it conjugates Leu from its aminoacyl-tRNA to the N-termini of proteins containing an N-terminal aspartate or glutamate. This chain is Aspartate/glutamate leucyltransferase, found in Rhodopseudomonas palustris (strain ATCC BAA-98 / CGA009).